A 2181-amino-acid chain; its full sequence is Non-reducing polyketide synthase subA (2181 aa).

The segment at 74-180 (QWVKGNSTQP…LALCCGAYID (107 aa)) is N-terminal acylcarrier protein transacylase domain (SAT). The region spanning 347–779 (QAQLLVLGPV…GTNAAMLVCQ (433 aa)) is the Ketosynthase family 3 (KS3) domain. Active-site for beta-ketoacyl synthase activity residues include Cys525, His661, and His702. Residues 891 to 1193 (VLAGQTGRRV…SFYPAALGEP (303 aa)) form a malonyl-CoA:ACP transacylase (MAT) domain region. Catalysis depends on Ser977, which acts as the For acyl/malonyl transferase activity. Residues 1269 to 1401 (VSLIGKTQNA…GVITLQEVYS (133 aa)) form an N-terminal hotdog fold region. The region spanning 1269–1579 (VSLIGKTQNA…FQKIAISSLK (311 aa)) is the PKS/mFAS DH domain. Residues 1276–1573 (QNAGVQTVEY…TILGAKFQKI (298 aa)) form a product template (PT) domain region. The tract at residues 1425–1579 (SASVVQGDFI…FQKIAISSLK (155 aa)) is C-terminal hotdog fold. The tract at residues 1652–1673 (ISGSSRSTSSSPPSLESRSQAM) is disordered. The span at 1653–1670 (SGSSRSTSSSPPSLESRS) shows a compositional bias: low complexity. The region spanning 1677-1753 (EITEGAGSAL…TLFHTIFPQQ (77 aa)) is the Carrier domain. Ser1713 is modified (O-(pantetheine 4'-phosphoryl)serine). The interval 1982 to 2164 (EFMNCLFSYN…QSGFGHVDWT (183 aa)) is methyltransferase (CMeT) domain.

It functions in the pathway secondary metabolite biosynthesis; terpenoid biosynthesis. In terms of biological role, non-reducing polyketide synthase; part of the gene cluster that mediates the biosynthesis of the immunosuppressants subglutinols, meroterpenoids consisting of an alpha-pyrone (4-hydroxy-5,6-dimethyl-2-pyrone) moiety attached to a decalin core fused to a five-membered cyclic ether carrying a prenylside chain. The first step of the pathway is the synthesis of the alpha-pyrone moiety by the polyketide synthase subA via condensation of one acetyl-CoA starter unit with 3 malonyl-CoA units and 2 methylations. The alpha-pyrone is then combined with geranylgeranyl pyrophosphate (GGPP) formed by the GGPP synthase subD through the action of the prenyltransferase subC to yield a linear alpha-pyrone diterpenoid. Subsequent steps in the subglutinol biosynthetic pathway involve the decalin core formation, which is thought to be initiated by the epoxidation of the C10-C11 olefin by the FAD-dependent oxidoreductase subE. The following cyclization cascade would be catalyzed by the terpene cyclase subB. Lastly, the FAD-dependent dehydrogenase subF probably catalyzes the five-membered cyclic ether formation to complete the formation of subglutinol A. Subsequent redox reactions appear to give rise to subglutinol C and D, however, it remains unclear which enzymes are responsible for these transformations. SubD may have secondary function in the conversion of the identified subglutinols to subglutinol analog 45, which seems to be the major product of the cluster. This is Non-reducing polyketide synthase subA from Metarhizium robertsii (strain ARSEF 23 / ATCC MYA-3075) (Metarhizium anisopliae (strain ARSEF 23)).